A 1417-amino-acid chain; its full sequence is DNA-directed RNA polymerase subunit beta' (1417 aa).

Zn(2+)-binding residues include Cys-68, Cys-70, Cys-83, and Cys-86. Mg(2+) is bound by residues Asp-458, Asp-460, and Asp-462. Residues Cys-811, Cys-884, Cys-891, and Cys-894 each coordinate Zn(2+).

The protein belongs to the RNA polymerase beta' chain family. In terms of assembly, the RNAP catalytic core consists of 2 alpha, 1 beta, 1 beta' and 1 omega subunit. When a sigma factor is associated with the core the holoenzyme is formed, which can initiate transcription. It depends on Mg(2+) as a cofactor. Zn(2+) is required as a cofactor.

It carries out the reaction RNA(n) + a ribonucleoside 5'-triphosphate = RNA(n+1) + diphosphate. Functionally, DNA-dependent RNA polymerase catalyzes the transcription of DNA into RNA using the four ribonucleoside triphosphates as substrates. The sequence is that of DNA-directed RNA polymerase subunit beta' from Francisella tularensis subsp. novicida (strain U112).